The primary structure comprises 129 residues: Small ribosomal subunit protein uS11 (129 aa).

It belongs to the universal ribosomal protein uS11 family. As to quaternary structure, part of the 30S ribosomal subunit. Interacts with proteins S7 and S18. Binds to IF-3.

Located on the platform of the 30S subunit, it bridges several disparate RNA helices of the 16S rRNA. Forms part of the Shine-Dalgarno cleft in the 70S ribosome. In Staphylococcus epidermidis (strain ATCC 12228 / FDA PCI 1200), this protein is Small ribosomal subunit protein uS11.